The primary structure comprises 505 residues: MVSIRPDEISAILKQQIEDYDKSVSVSNVGTVLQVGDGIARVYGLDKVMAGELVVFEDGTEGLALNLEDDNVGVVLMGEGYGIQEGSTVKATGKIASVPVGEAMLGRVVNPLGQPMDGKGEIASTDVRLIENPAPGIIQRKSVHEPMQTGITAIDAMIPIGRGQRELIIGDRQTGKTAIAIDTIINQKSEDVVCVYVAIGQKAASVAQVTEVLRERGALDYTVIVAAGASEAASLQYLAPYTGAAIAEHFMYQGKATLVIYDDLTKQAQAYRQMSLLLRRPPGREAYPGDVFYCHSRLLERAAKLSDAMGKGSMTALPIIETQAGDVSAYIPTNVISITDGQVFLSSDLFNSGLRPAINVGISVSRVGGAAQTKAIKKIAGTLKLELAQFDELAAFSQFASDLDAATQAQLGRGKRLRELLKQAQFSPLLLAEQVAIVYAGTKGLLDELPVEKVTEFVRELRDYLKTSKPEFINAIQTEKVMSESSEAILKDAIKQVVSGLLVAA.

170–177 (GDRQTGKT) provides a ligand contact to ATP.

The protein belongs to the ATPase alpha/beta chains family. As to quaternary structure, F-type ATPases have 2 components, CF(1) - the catalytic core - and CF(0) - the membrane proton channel. CF(1) has five subunits: alpha(3), beta(3), gamma(1), delta(1), epsilon(1). CF(0) has four main subunits: a(1), b(1), b'(1) and c(9-12).

It is found in the cellular thylakoid membrane. The catalysed reaction is ATP + H2O + 4 H(+)(in) = ADP + phosphate + 5 H(+)(out). In terms of biological role, produces ATP from ADP in the presence of a proton gradient across the membrane. The alpha chain is a regulatory subunit. This Synechococcus sp. (strain RCC307) protein is ATP synthase subunit alpha.